The chain runs to 329 residues: DNA-directed RNA polymerase subunit alpha (329 aa).

An alpha N-terminal domain (alpha-NTD) region spans residues 1-235; the sequence is MQGSVTEFLK…EQLEAFVDLR (235 aa). The interval 249-329 is alpha C-terminal domain (alpha-CTD); it reads FDPILLRPVD…NWPPASIADE (81 aa).

This sequence belongs to the RNA polymerase alpha chain family. Homodimer. The RNAP catalytic core consists of 2 alpha, 1 beta, 1 beta' and 1 omega subunit. When a sigma factor is associated with the core the holoenzyme is formed, which can initiate transcription.

The catalysed reaction is RNA(n) + a ribonucleoside 5'-triphosphate = RNA(n+1) + diphosphate. Its function is as follows. DNA-dependent RNA polymerase catalyzes the transcription of DNA into RNA using the four ribonucleoside triphosphates as substrates. The protein is DNA-directed RNA polymerase subunit alpha of Yersinia pestis bv. Antiqua (strain Antiqua).